The following is a 725-amino-acid chain: Methionine--tRNA ligase (725 aa).

Positions 27-37 match the 'HIGH' region motif; the sequence is PYANGQIHIGH. Positions 158, 161, 171, and 174 each coordinate Zn(2+). Residues 348–352 carry the 'KMSKS' region motif; the sequence is KMSKS. Lys351 provides a ligand contact to ATP. One can recognise a tRNA-binding domain in the interval 619–725; that stretch reads DFAKIDLRIA…SGAKPGMRVK (107 aa).

This sequence belongs to the class-I aminoacyl-tRNA synthetase family. MetG type 1 subfamily. As to quaternary structure, homodimer. The cofactor is Zn(2+).

The protein resides in the cytoplasm. It carries out the reaction tRNA(Met) + L-methionine + ATP = L-methionyl-tRNA(Met) + AMP + diphosphate. Is required not only for elongation of protein synthesis but also for the initiation of all mRNA translation through initiator tRNA(fMet) aminoacylation. This chain is Methionine--tRNA ligase, found in Burkholderia pseudomallei (strain 1710b).